A 385-amino-acid chain; its full sequence is DNA replication and repair protein RecF (385 aa).

30–37 (GRNGQGKT) serves as a coordination point for ATP.

Belongs to the RecF family.

Its subcellular location is the cytoplasm. The RecF protein is involved in DNA metabolism; it is required for DNA replication and normal SOS inducibility. RecF binds preferentially to single-stranded, linear DNA. It also seems to bind ATP. This chain is DNA replication and repair protein RecF, found in Leifsonia xyli subsp. xyli (strain CTCB07).